The primary structure comprises 345 residues: Protein RecA (345 aa).

ATP is bound at residue glycine 65–threonine 72. A compositionally biased stretch (basic and acidic residues) spans glutamate 326–glutamate 336. The tract at residues glutamate 326–glutamate 345 is disordered.

Belongs to the RecA family.

It is found in the cytoplasm. Can catalyze the hydrolysis of ATP in the presence of single-stranded DNA, the ATP-dependent uptake of single-stranded DNA by duplex DNA, and the ATP-dependent hybridization of homologous single-stranded DNAs. It interacts with LexA causing its activation and leading to its autocatalytic cleavage. The protein is Protein RecA of Stenotrophomonas maltophilia (strain K279a).